A 291-amino-acid polypeptide reads, in one-letter code: MELIIATRKSKLAQVQTEKVMELLKEKENVDSKKLLVMTEGDRRLDVSLNKIGGKGLFVKEIELALLNKEAHGAVHSMKDVPFELPSEFELVAMPEREDIRDAFVSLNGSTLSNLRKGARIGTSSIRRAEQLKLFRDDLEIVPIRGNVQTRIKKITEENLDGIILAAAGLKRLGMEDVISDYFDPKVFLPAIGQGALGIECLKGGEFNDYFKALDSKEVRTTVEAERSFMKVLNGGCHSLIGAYSEVKDNDLYMIGTFTVNNRIVKKDILGNKEDNILLGKKLAEKILGEV.

The residue at position 237 (Cys-237) is an S-(dipyrrolylmethanemethyl)cysteine.

This sequence belongs to the HMBS family. As to quaternary structure, monomer. Dipyrromethane is required as a cofactor.

It catalyses the reaction 4 porphobilinogen + H2O = hydroxymethylbilane + 4 NH4(+). The protein operates within porphyrin-containing compound metabolism; protoporphyrin-IX biosynthesis; coproporphyrinogen-III from 5-aminolevulinate: step 2/4. In terms of biological role, tetrapolymerization of the monopyrrole PBG into the hydroxymethylbilane pre-uroporphyrinogen in several discrete steps. The sequence is that of Porphobilinogen deaminase from Clostridium perfringens (strain ATCC 13124 / DSM 756 / JCM 1290 / NCIMB 6125 / NCTC 8237 / Type A).